We begin with the raw amino-acid sequence, 1009 residues long: RNA2 polyprotein (1009 aa).

An involved in tubule formation by the movement protein region spans residues 387-393 (FVYKIGG).

In terms of assembly, interacts with the large capsid protein. As to quaternary structure, interacts with the small capsid protein. Homomultimer; assembles as pentons. Interacts with the movement protein (via C-terminus). Interacts (via C-terminus) with the large capsid protein. Specific enzymatic cleavages by picornain 3C-like protease in vivo yield mature proteins.

It is found in the host cell junction. Its subcellular location is the host plasmodesma. The protein localises to the virion. Functionally, responsible for viral RNA2 accumulation. May function by recruiting the RNA1-encoded polyprotein that contains the replication protein to RNA2 and enable its replication. In terms of biological role, transports the viral genome to neighboring plant cells directly through plasmosdesmata, without any budding. The movement protein allows efficient cell to cell propagation, by bypassing the host cell wall barrier. Acts by forming a tubular structure at the host plasmodesmata, enlarging it enough to allow free passage of virion capsids. Binds to GTP and to single-stranded RNA and single-stranded DNA in a non-sequence-specific manner. Its function is as follows. Together with the small capsid protein, forms an icosahedral capsid (T=3) enclosing the viral positive strand RNA genome, with a diameter of approximately 300 Angstroms. The capsid is formed from 60 copies each of the large and the small capsid protein. The large capsid protein interacts with the viral RNA. Together with the large capsid protein, forms an icosahedral capsid (T=3) enclosing the viral positive strand RNA genome, with a diameter of approximately 300 Angstroms. The capsid is formed from 60 copies each of the large and the small capsid protein. The small capsid protein forms the turrets at the fivefold axes of the viral particle. The polypeptide is RNA2 polyprotein (Squash mosaic virus (strain melon) (SqMV)).